Consider the following 319-residue polypeptide: D-alanine--D-alanine ligase (319 aa).

An ATP-grasp domain is found at 120-315; the sequence is KRVLAQAGVP…YPELLRRLVE (196 aa). An ATP-binding site is contributed by 147–198; the sequence is DPPFFVKPANTGSSVGISRVERFQDLEAALALAFRYDEKAVVEKALSPVREL. D270, E282, and N284 together coordinate Mg(2+).

Belongs to the D-alanine--D-alanine ligase family. Mg(2+) is required as a cofactor. It depends on Mn(2+) as a cofactor.

The protein localises to the cytoplasm. It carries out the reaction 2 D-alanine + ATP = D-alanyl-D-alanine + ADP + phosphate + H(+). The protein operates within cell wall biogenesis; peptidoglycan biosynthesis. Functionally, cell wall formation. The polypeptide is D-alanine--D-alanine ligase (Thermus thermophilus (strain ATCC 27634 / DSM 579 / HB8)).